The sequence spans 124 residues: UPF0102 protein TM1040_0449 (124 aa).

This sequence belongs to the UPF0102 family.

This Ruegeria sp. (strain TM1040) (Silicibacter sp.) protein is UPF0102 protein TM1040_0449.